We begin with the raw amino-acid sequence, 369 residues long: Coiled-coil domain-containing protein 130 homolog (369 aa).

A compositionally biased stretch (basic and acidic residues) spans 233-263 (TRYRDTKTHDDHLESSRDRIESRRIFRRPEE). A disordered region spans residues 233 to 369 (TRYRDTKTHD…EYGNSSDDSD (137 aa)). A compositionally biased stretch (low complexity) spans 266 to 282 (TPSTSSGSSGGAVPSAS). Positions 283–297 (ERLKATMKAERDKRI) are enriched in basic and acidic residues. Low complexity predominate over residues 299–310 (ASFSTAGTSSAT).

It belongs to the CWC16 family.

This Caenorhabditis elegans protein is Coiled-coil domain-containing protein 130 homolog.